The following is a 115-amino-acid chain: MIPAKDMAKVMIVMLAICFLTKSDGKSVKKRSVSEIQLMHNLGKHLNSMERVEWLRKKLQDVHNFIALGAPLAPRDAGSQRPRKKEDNILVESHEKSLGEADKADVDVLTKAKSQ.

An N-terminal signal peptide occupies residues Met-1 to Gly-25. A propeptide spanning residues Lys-26–Arg-31 is cleaved from the precursor. Residues Arg-51–Gly-69 are important for receptor binding. Residues Leu-72–Lys-96 form a disordered region. Positions Lys-84–Lys-96 are enriched in basic and acidic residues.

Belongs to the parathyroid hormone family. Interacts with PTH1R (via N-terminal extracellular domain).

It is found in the secreted. Functionally, parathyroid hormone elevates calcium level by dissolving the salts in bone and preventing their renal excretion. Acts by binding to its receptor, PTH1R, activating G protein-coupled receptor signaling. Stimulates [1-14C]-2-deoxy-D-glucose (2DG) transport and glycogen synthesis in osteoblastic cells. In Macaca fascicularis (Crab-eating macaque), this protein is Parathyroid hormone (PTH).